A 562-amino-acid chain; its full sequence is Arginine--tRNA ligase (562 aa).

Residues 130-140 carry the 'HIGH' region motif; sequence ANPTGPLHIGH.

The protein belongs to the class-I aminoacyl-tRNA synthetase family. As to quaternary structure, monomer.

The protein resides in the cytoplasm. It carries out the reaction tRNA(Arg) + L-arginine + ATP = L-arginyl-tRNA(Arg) + AMP + diphosphate. The sequence is that of Arginine--tRNA ligase from Geobacter metallireducens (strain ATCC 53774 / DSM 7210 / GS-15).